A 417-amino-acid chain; its full sequence is Glutamate-1-semialdehyde 2,1-aminomutase (417 aa).

Lys263 bears the N6-(pyridoxal phosphate)lysine mark.

It belongs to the class-III pyridoxal-phosphate-dependent aminotransferase family. HemL subfamily. Requires pyridoxal 5'-phosphate as cofactor.

The protein localises to the cytoplasm. It catalyses the reaction (S)-4-amino-5-oxopentanoate = 5-aminolevulinate. The protein operates within porphyrin-containing compound metabolism; protoporphyrin-IX biosynthesis; 5-aminolevulinate from L-glutamyl-tRNA(Glu): step 2/2. This Methanospirillum hungatei JF-1 (strain ATCC 27890 / DSM 864 / NBRC 100397 / JF-1) protein is Glutamate-1-semialdehyde 2,1-aminomutase.